The chain runs to 70 residues: Small ribosomal subunit protein bS21 (70 aa).

It belongs to the bacterial ribosomal protein bS21 family.

The polypeptide is Small ribosomal subunit protein bS21 (Chromobacterium violaceum (strain ATCC 12472 / DSM 30191 / JCM 1249 / CCUG 213 / NBRC 12614 / NCIMB 9131 / NCTC 9757 / MK)).